The chain runs to 904 residues: Transcription factor E2F7 (904 aa).

A disordered region spans residues 61 to 80 (TPDRNPITPVKPVDRQPQVE). Ser-96 is subject to Phosphoserine. A DNA-binding region spans residues 143 to 212 (RKQKSLGLLC…VAKNQYGWHG (70 aa)). Positions 252–269 (GERRKDGSPDPRDPHLLD) are enriched in basic and acidic residues. The tract at residues 252–283 (GERRKDGSPDPRDPHLLDFSEADYPSSSANSR) is disordered. A DNA-binding region spans residues 283–368 (RKDKSLRIMS…GRKPAFKWIG (86 aa)). Phosphoserine is present on Ser-411. Positions 560-628 (LSPESRSEED…VMPKKPSSST (69 aa)) are disordered. Phosphoserine is present on Ser-833. A disordered region spans residues 846 to 904 (AEQSPAPATPKSIQRRHRETFFKTPGSLGDPVFRRKERNQSRNTSSAQRRLEISSSGPD). Polar residues predominate over residues 886–904 (SRNTSSAQRRLEISSSGPD).

Belongs to the E2F/DP family. In terms of assembly, interacts with HIF1A. Homodimer and heterodimer: mainly forms homodimers and, to a lesser extent, heterodimers with E2F8. Dimerization is important for DNA-binding. Interacts with MN1. Widely expressed with highest levels in skin and thymus and very low levels in brain, muscle and stomach. Expressed in trophoblast giant cells throughout placenta development (at protein level).

It localises to the nucleus. In terms of biological role, atypical E2F transcription factor that participates in various processes such as angiogenesis, polyploidization of specialized cells and DNA damage response. Mainly acts as a transcription repressor that binds DNA independently of DP proteins and specifically recognizes the E2 recognition site 5'-TTTC[CG]CGC-3'. Directly represses transcription of classical E2F transcription factors such as E2F1. Acts as a regulator of S-phase by recognizing and binding the E2-related site 5'-TTCCCGCC-3' and mediating repression of G1/S-regulated genes. Plays a key role in polyploidization of cells in placenta and liver by regulating the endocycle, probably by repressing genes promoting cytokinesis and antagonizing action of classical E2F proteins (E2F1, E2F2 and/or E2F3). Required for placental development by promoting polyploidization of trophoblast giant cells. Also involved in DNA damage response: up-regulated by p53/TP53 following genotoxic stress and acts as a downstream effector of p53/TP53-dependent repression by mediating repression of indirect p53/TP53 target genes involved in DNA replication. Acts as a promoter of sprouting angiogenesis, possibly by acting as a transcription activator: associates with HIF1A, recognizes and binds the VEGFA promoter, which is different from canonical E2 recognition site, and activates expression of the VEGFA gene. Acts as a negative regulator of keratinocyte differentiation. This is Transcription factor E2F7 (E2f7) from Mus musculus (Mouse).